Reading from the N-terminus, the 375-residue chain is Chaperone protein DnaJ (375 aa).

Positions 5 to 70 (DYYEVLEISR…QKRQAYDRFG (66 aa)) constitute a J domain. A CR-type zinc finger spans residues 133–211 (GKEVTIQIPS…CHGHGRVRRN (79 aa)). Zn(2+) is bound by residues cysteine 146, cysteine 149, cysteine 163, cysteine 166, cysteine 185, cysteine 188, cysteine 199, and cysteine 202. 4 CXXCXGXG motif repeats span residues 146-153 (CEVCRGSG), 163-170 (CATCGGRG), 185-192 (CPQCNGSG), and 199-206 (CTNCHGHG).

Belongs to the DnaJ family. As to quaternary structure, homodimer. Requires Zn(2+) as cofactor.

It localises to the cytoplasm. Participates actively in the response to hyperosmotic and heat shock by preventing the aggregation of stress-denatured proteins and by disaggregating proteins, also in an autonomous, DnaK-independent fashion. Unfolded proteins bind initially to DnaJ; upon interaction with the DnaJ-bound protein, DnaK hydrolyzes its bound ATP, resulting in the formation of a stable complex. GrpE releases ADP from DnaK; ATP binding to DnaK triggers the release of the substrate protein, thus completing the reaction cycle. Several rounds of ATP-dependent interactions between DnaJ, DnaK and GrpE are required for fully efficient folding. Also involved, together with DnaK and GrpE, in the DNA replication of plasmids through activation of initiation proteins. The polypeptide is Chaperone protein DnaJ (Acidithiobacillus ferrooxidans (strain ATCC 23270 / DSM 14882 / CIP 104768 / NCIMB 8455) (Ferrobacillus ferrooxidans (strain ATCC 23270))).